Consider the following 2327-residue polypeptide: Nonribosomal peptide synthetase apmB (2327 aa).

The interval 214 to 605 is adenylation 1; that stretch reads DTQAKSRPDS…GRKDMQIKLR (392 aa). Residues 734–810 form the Carrier 1 domain; the sequence is EPATATGKVL…EMADACTKVI (77 aa). Residue Ser-771 is modified to O-(pantetheine 4'-phosphoryl)serine. The interval 845-1259 is condensation 1; sequence EDLYPCTAMQ…IFISSKDQES (415 aa). The interval 1281–1675 is adenylation 2; that stretch reads ERIAERPDHE…RRKDTQVKLR (395 aa). The region spanning 1816–1892 is the Carrier 2 domain; it reads PPTTDMQITM…AISAVAETLS (77 aa). At Ser-1853 the chain carries O-(pantetheine 4'-phosphoryl)serine. The interval 1937 to 2260 is condensation 2; it reads TDFQSLAING…VFQYQDFGGE (324 aa). The tract at residues 2299–2327 is disordered; the sequence is RVDLPRRPSPAGDTRDGPTAASDSPSRAR.

The protein belongs to the NRP synthetase family.

The enzyme catalyses N-benzoyl-L-phenylalaninol + benzoate + L-phenylalanine + 2 ATP = asperphenamate + 2 AMP + 2 diphosphate + H(+). It participates in secondary metabolite biosynthesis. Nonribosomal peptide synthetase; part of the gene cluster that mediates the biosynthesis of asperphenamate, a rare linear amino acid ester that exhibits antitumor activity towards a number of cell lines. The structure of asperphenamate contains two subunits, N-benzoylphenylalanine and N-benzoylphenylalaninol, which are connected by an inter-molecular ester bond. The first step of asperphenamate biosynthesis is the generation of N-benzoylphenylalaninol by the nonribosomal peptide synthase apmA. Using phenylalanine and benzoic acid as substrates, apmA catalyzes amide bond formation and tethers the intermediate into the NRPS chain. Then, the terminal R domain of apmA catalyzes the reduction reaction to get the shunt product N-benzoylphenylalaninol. Subsequently, the nonribosomal peptide synthase apmB activates the same substrates as does apmA (phenylalanine and benzoic acid) to produce N-benzoylphenylalanine before condensing N-benzoylphenylalanine and N-benzoylphenylalaninol to release asperphenamate. This chain is Nonribosomal peptide synthetase apmB, found in Penicillium brevicompactum.